The sequence spans 333 residues: Coiled-coil domain-containing protein 68 (333 aa).

Coiled-coil stretches lie at residues 86–120 (LDLL…SREA) and 160–302 (EKEQ…HWTE).

As to quaternary structure, interacts with CEP170.

It is found in the cytoplasm. Its subcellular location is the cytoskeleton. It localises to the microtubule organizing center. The protein localises to the centrosome. The protein resides in the centriole. In terms of biological role, centriolar protein required for centriole subdistal appendage assembly and microtubule anchoring in interphase cells. Together with CCDC120, cooperate with subdistal appendage components ODF2, NIN and CEP170 for hierarchical subdistal appendage assembly. The polypeptide is Coiled-coil domain-containing protein 68 (Ccdc68) (Mus musculus (Mouse)).